The following is a 556-amino-acid chain: Glutamine--tRNA ligase (556 aa).

The 'HIGH' region signature appears at 34 to 44 (PEPNGYLHIGH). Residues 35-37 (EPN) and 41-47 (HIGHAKS) contribute to the ATP site. The L-glutamine site is built by aspartate 67 and tyrosine 212. ATP is bound by residues threonine 231, 261-262 (RL), and 269-271 (MSK). The 'KMSKS' region motif lies at 268 to 272 (VMSKR).

This sequence belongs to the class-I aminoacyl-tRNA synthetase family. Monomer.

The protein localises to the cytoplasm. The catalysed reaction is tRNA(Gln) + L-glutamine + ATP = L-glutaminyl-tRNA(Gln) + AMP + diphosphate. The protein is Glutamine--tRNA ligase of Vibrio campbellii (strain ATCC BAA-1116).